The sequence spans 446 residues: Glucose-6-phosphate isomerase (446 aa).

E288 functions as the Proton donor in the catalytic mechanism. Residues H309 and K423 contribute to the active site.

The protein belongs to the GPI family.

The protein resides in the cytoplasm. It carries out the reaction alpha-D-glucose 6-phosphate = beta-D-fructose 6-phosphate. Its pathway is carbohydrate biosynthesis; gluconeogenesis. It functions in the pathway carbohydrate degradation; glycolysis; D-glyceraldehyde 3-phosphate and glycerone phosphate from D-glucose: step 2/4. Its function is as follows. Catalyzes the reversible isomerization of glucose-6-phosphate to fructose-6-phosphate. The chain is Glucose-6-phosphate isomerase from Lacticaseibacillus casei (strain BL23) (Lactobacillus casei).